We begin with the raw amino-acid sequence, 71 residues long: Large ribosomal subunit protein bL31 (71 aa).

Zn(2+)-binding residues include Cys16, Cys18, Cys37, and Cys40.

This sequence belongs to the bacterial ribosomal protein bL31 family. Type A subfamily. As to quaternary structure, part of the 50S ribosomal subunit. It depends on Zn(2+) as a cofactor.

Binds the 23S rRNA. This chain is Large ribosomal subunit protein bL31, found in Mannheimia succiniciproducens (strain KCTC 0769BP / MBEL55E).